The primary structure comprises 326 residues: GTPase Obg (326 aa).

Residues 1-159 (MKFVDSAKIY…LEIELELKLM (159 aa)) enclose the Obg domain. The disordered stretch occupies residues 119 to 138 (EGGKGGKGNPHFASSTRQAP). One can recognise an OBG-type G domain in the interval 160 to 323 (ADVGLVGFPN…LKDELWSRVK (164 aa)). Residues 166-173 (GFPNAGKS), 191-195 (FTTLV), 213-216 (DIPG), 280-283 (TKMD), and 304-306 (SSV) each bind GTP. Mg(2+)-binding residues include Ser-173 and Thr-193.

Belongs to the TRAFAC class OBG-HflX-like GTPase superfamily. OBG GTPase family. Monomer. Requires Mg(2+) as cofactor.

It localises to the cytoplasm. Its function is as follows. An essential GTPase which binds GTP, GDP and possibly (p)ppGpp with moderate affinity, with high nucleotide exchange rates and a fairly low GTP hydrolysis rate. Plays a role in control of the cell cycle, stress response, ribosome biogenesis and in those bacteria that undergo differentiation, in morphogenesis control. The sequence is that of GTPase Obg from Chlorobium phaeobacteroides (strain BS1).